We begin with the raw amino-acid sequence, 301 residues long: ATP synthase gamma chain (301 aa).

Belongs to the ATPase gamma chain family. F-type ATPases have 2 components, CF(1) - the catalytic core - and CF(0) - the membrane proton channel. CF(1) has five subunits: alpha(3), beta(3), gamma(1), delta(1), epsilon(1). CF(0) has three main subunits: a, b and c.

The protein localises to the cell inner membrane. In terms of biological role, produces ATP from ADP in the presence of a proton gradient across the membrane. The gamma chain is believed to be important in regulating ATPase activity and the flow of protons through the CF(0) complex. This is ATP synthase gamma chain from Helicobacter pylori (strain ATCC 700392 / 26695) (Campylobacter pylori).